We begin with the raw amino-acid sequence, 427 residues long: Fc receptor-like B (427 aa).

The signal sequence occupies residues 1-17; the sequence is MWMLAALLLLVPRSGKA. Ig-like C2-type domains lie at 23 to 101 and 103 to 189; these read PVLT…LSVS and DWLI…VAVT. 2 cysteine pairs are disulfide-bonded: Cys44-Cys85 and Cys124-Cys168. N-linked (GlcNAc...) asparagine glycosylation is present at Asn152. Positions 401–418 are enriched in polar residues; the sequence is TPETPNSHVTVNPATPET. The interval 401 to 427 is disordered; sequence TPETPNSHVTVNPATPETTVMEGRVDS.

In terms of tissue distribution, expressed at low levels. Expressed in B-lymphocytes. Detected in spleen, lymph node, kidney, lung and brain.

Its subcellular location is the cytoplasm. It localises to the endoplasmic reticulum. In Mus musculus (Mouse), this protein is Fc receptor-like B (Fcrlb).